The following is a 489-amino-acid chain: COX3 mRNA-specific translational activator PET494 (489 aa).

The protein resides in the mitochondrion inner membrane. Its function is as follows. Required for the expression of the mitochondrial gene for cytochrome c oxidase subunit III (COX3). The protein is COX3 mRNA-specific translational activator PET494 (PET494) of Saccharomyces bayanus (Yeast).